The sequence spans 73 residues: Mu-scoloptoxin(15)-Ssd1a (73 aa).

The N-terminal stretch at Met-1 to Ala-20 is a signal peptide.

Contains 2 disulfide bonds. In terms of tissue distribution, expressed by the venom gland.

The protein resides in the secreted. Its function is as follows. Voltage-gated sodium channel inhibitor. This is Mu-scoloptoxin(15)-Ssd1a from Scolopendra dehaani (Thai centipede).